The primary structure comprises 158 residues: RNA pyrophosphohydrolase (158 aa).

The region spanning G6–K149 is the Nudix hydrolase domain. Positions G38 to G59 match the Nudix box motif.

The protein belongs to the Nudix hydrolase family. RppH subfamily. Requires a divalent metal cation as cofactor.

Accelerates the degradation of transcripts by removing pyrophosphate from the 5'-end of triphosphorylated RNA, leading to a more labile monophosphorylated state that can stimulate subsequent ribonuclease cleavage. This chain is RNA pyrophosphohydrolase, found in Blochmanniella floridana.